The sequence spans 248 residues: 4-hydroxy-tetrahydrodipicolinate reductase (248 aa).

NAD(+)-binding positions include Asp32, 74–76 (GTT), and 99–102 (SANF). His134 (proton donor/acceptor) is an active-site residue. A (S)-2,3,4,5-tetrahydrodipicolinate-binding site is contributed by His135. Lys138 functions as the Proton donor in the catalytic mechanism. 144 to 145 (GT) provides a ligand contact to (S)-2,3,4,5-tetrahydrodipicolinate.

This sequence belongs to the DapB family.

It is found in the cytoplasm. The enzyme catalyses (S)-2,3,4,5-tetrahydrodipicolinate + NAD(+) + H2O = (2S,4S)-4-hydroxy-2,3,4,5-tetrahydrodipicolinate + NADH + H(+). The catalysed reaction is (S)-2,3,4,5-tetrahydrodipicolinate + NADP(+) + H2O = (2S,4S)-4-hydroxy-2,3,4,5-tetrahydrodipicolinate + NADPH + H(+). Its pathway is amino-acid biosynthesis; L-lysine biosynthesis via DAP pathway; (S)-tetrahydrodipicolinate from L-aspartate: step 4/4. In terms of biological role, catalyzes the conversion of 4-hydroxy-tetrahydrodipicolinate (HTPA) to tetrahydrodipicolinate. The polypeptide is 4-hydroxy-tetrahydrodipicolinate reductase (Pelodictyon phaeoclathratiforme (strain DSM 5477 / BU-1)).